Consider the following 103-residue polypeptide: Co-chaperonin GroES (103 aa).

The protein belongs to the GroES chaperonin family. In terms of assembly, heptamer of 7 subunits arranged in a ring. Interacts with the chaperonin GroEL.

It is found in the cytoplasm. In terms of biological role, together with the chaperonin GroEL, plays an essential role in assisting protein folding. The GroEL-GroES system forms a nano-cage that allows encapsulation of the non-native substrate proteins and provides a physical environment optimized to promote and accelerate protein folding. GroES binds to the apical surface of the GroEL ring, thereby capping the opening of the GroEL channel. This Microcystis aeruginosa (strain NIES-843 / IAM M-2473) protein is Co-chaperonin GroES.